Here is a 150-residue protein sequence, read N- to C-terminus: Sulfur-rich protein, serovar D (150 aa).

The next 2 helical transmembrane spans lie at 41 to 61 (VGLV…LVSA) and 67 to 87 (AIYL…VGIL).

It is found in the membrane. This chain is Sulfur-rich protein, serovar D (srp), found in Chlamydia trachomatis serovar D (strain ATCC VR-885 / DSM 19411 / UW-3/Cx).